Reading from the N-terminus, the 780-residue chain is Ribosome biogenesis protein BOP1 homolog (780 aa).

Basic residues predominate over residues 1–11 (MTKKQAIKRKV). The tract at residues 1–155 (MTKKQAIKRK…DSDTSDEEDI (155 aa)) is disordered. Over residues 17–26 (TNEQSSASEP) the composition is skewed to polar residues. 4 stretches are compositionally biased toward acidic residues: residues 44 to 53 (EDTTDDEGID), 60 to 72 (SSED…DEEG), 83 to 113 (AEGD…DAEE), and 145 to 154 (EDSDTSDEED). WD repeat units follow at residues 441-482 (GHTD…RTIE), 484-522 (NDVV…KLLI), 566-608 (THFK…SQIP), 611-649 (KSKG…LIKK), 652-691 (TNSK…KPYQ), 695-734 (LHRN…DLLQ), and 750-780 (RDEF…RLYT).

This sequence belongs to the WD repeat BOP1/ERB1 family.

It localises to the nucleus. The protein resides in the nucleolus. Its subcellular location is the nucleoplasm. Its function is as follows. Required for maturation of ribosomal RNAs and formation of the large ribosomal subunit. The sequence is that of Ribosome biogenesis protein BOP1 homolog from Drosophila virilis (Fruit fly).